We begin with the raw amino-acid sequence, 467 residues long: Zinc finger protein 410 (467 aa).

Disordered stretches follow at residues 84–111 and 187–214; these read PDGE…SLLQ and NAKT…PLPQ. 5 consecutive C2H2-type zinc fingers follow at residues 219–243, 249–273, 279–303, 309–333, and 339–362; these read LKCT…LKTH, FICP…MRTH, FVCP…LRIH, FLCE…LVVH, and HQCQ…RKHH. Positions 221, 226, 239, 243, 251, 256, 269, 273, 281, 286, 299, 303, 311, 316, 329, 333, 341, 344, 357, and 361 each coordinate Zn(2+).

In terms of assembly, interacts with CDKN2A/p14ARF. O-glycosylated. O-GlcNAcylation may occur in response to increasing glucose levels and affect transcription factor activity. In terms of processing, sumoylated. Sumoylation increases its half-life, possibly by blocking ubiquitin-mediated degradation.

Its subcellular location is the nucleus. It localises to the chromosome. Its function is as follows. Transcription factor that binds to the sequence motif 5'-CATCCCATAATA-3', and is specifically required to silence expression of fetal hemoglobin in adult erythroid cells. Prevents expression of fetal hemoglobin genes HBG1 and HBG2 through CHD4: acts as a direct transcriptional activator of CHD4, a central component of the NuRD complex that represses transcription of fetal hemoglobin genes HBG1 and HBG2 in erythroid cells. May also activate transcription of matrix-remodeling genes such as MMP1 during fibroblast senescence. May activate transcription of the gap junction gene GJC1, perhaps in response to increasing glucose. However, recent studies suggest that ZNF410 is dedicated to regulate expression of a single gene: CHD4. The protein is Zinc finger protein 410 of Bos taurus (Bovine).